A 560-amino-acid chain; its full sequence is Membrane protein insertase YidC (560 aa).

The helical transmembrane segment at 1–21 (MDIKRTILIAALAVVSYVMVL) threads the bilayer. The tract at residues 42–66 (VAPGLPDGVPAGNNGASADVPSANA) is disordered. A run of 5 helical transmembrane segments spans residues 341-361 (LELT…FWLL), 367-387 (LLGN…GLFF), 437-457 (LGGC…YWVL), 468-488 (WILW…PIIM), and 515-535 (PIIF…YWVV).

The protein belongs to the OXA1/ALB3/YidC family. Type 1 subfamily. As to quaternary structure, interacts with the Sec translocase complex via SecD. Specifically interacts with transmembrane segments of nascent integral membrane proteins during membrane integration.

It localises to the cell inner membrane. Required for the insertion and/or proper folding and/or complex formation of integral membrane proteins into the membrane. Involved in integration of membrane proteins that insert both dependently and independently of the Sec translocase complex, as well as at least some lipoproteins. Aids folding of multispanning membrane proteins. In Pseudomonas putida (strain ATCC 700007 / DSM 6899 / JCM 31910 / BCRC 17059 / LMG 24140 / F1), this protein is Membrane protein insertase YidC.